The primary structure comprises 215 residues: FGFR1 oncogene partner 2 homolog (215 aa).

Coiled coils occupy residues 5–104 and 161–185; these read IEKA…MSKY and KEQE…ITRE. The tract at residues 194 to 215 is disordered; the sequence is DASESTSLSALVTNSDLSLRKN. Residues 197–215 show a composition bias toward polar residues; the sequence is ESTSLSALVTNSDLSLRKN.

It belongs to the SIKE family.

Its subcellular location is the cytoplasm. In terms of biological role, may be involved in wound healing pathway. This is FGFR1 oncogene partner 2 homolog (FGFR1OP2) from Pongo abelii (Sumatran orangutan).